The following is a 246-amino-acid chain: 2',3'-cyclic-nucleotide 3'-phosphodiesterase (246 aa).

Histidine 40 acts as the Proton donor/acceptor in catalysis. Threonine 42 is a binding site for substrate. The span at 133–146 shows a compositional bias: polar residues; sequence QNPQLYTKDNNGNT. The interval 133 to 159 is disordered; the sequence is QNPQLYTKDNNGNTIRRKPSKKKSKTT. Residues 147–156 are compositionally biased toward basic residues; the sequence is IRRKPSKKKS. Histidine 188 serves as the catalytic Proton donor/acceptor. Substrate contacts are provided by serine 190 and tyrosine 193.

This sequence belongs to the 2H phosphoesterase superfamily. CPD1 family.

It localises to the golgi apparatus. It catalyses the reaction a nucleoside 2',3'-cyclic phosphate + H2O = a nucleoside 2'-phosphate + H(+). Its function is as follows. Involved in the metabolism of ADP-ribose 1',2'-cyclic phosphate which is produced as a consequence of tRNA splicing. The chain is 2',3'-cyclic-nucleotide 3'-phosphodiesterase (CPD1) from Candida albicans (strain SC5314 / ATCC MYA-2876) (Yeast).